The primary structure comprises 214 residues: Exosome complex component RRP46 homolog (214 aa).

This sequence belongs to the RNase PH family. Homodimer. Component of the RNA exosome complex. Interacts with crn-4; interaction promotes the DNase activity of crn-4. Interacts with crn-3, cps-6 and cyn-13.

Its subcellular location is the cytoplasm. It localises to the nucleus. Its function is as follows. Non-catalytic component of the RNA exosome complex which has 3'-&gt;5' exoribonuclease activity and participates in a multitude of cellular RNA processing and degradation events. Involved in apoptotic DNA degradation. In vitro, does not bind or digest single-stranded RNA. In vitro, binds to double-stranded DNA without detectable DNase activity. This is Exosome complex component RRP46 homolog from Caenorhabditis elegans.